A 269-amino-acid polypeptide reads, in one-letter code: Endo-1,3-1,4-beta-glycanase ExoK (269 aa).

The signal sequence occupies residues 1–29 (MTIDRYRRFARLAFIATLPLAGLATAAAA). Residues 40–252 (DDFDTLDTRV…RVAFTAAGDE (213 aa)) enclose the GH16 domain. E138 functions as the Nucleophile in the catalytic mechanism. E142 functions as the Proton donor in the catalytic mechanism.

The protein belongs to the glycosyl hydrolase 16 family.

Its subcellular location is the secreted. The protein operates within glycan metabolism; exopolysaccharide biosynthesis. In terms of biological role, cleaves high molecular weight succinoglycan to yield LMW succinoglycan. Dynamically regulates the molecular weight distribution of succinoglycan by cleaving nascent succinoglycan only during a limited period after its synthesis, perhaps before it undergoes a time-dependent change in its conformation or aggregation state. This Rhizobium meliloti (strain 1021) (Ensifer meliloti) protein is Endo-1,3-1,4-beta-glycanase ExoK (exoK).